Reading from the N-terminus, the 812-residue chain is Phospholipase D alpha 1 (812 aa).

Residues 1 to 46 (MAQMLLHGTLHATIFEAASLSNPHRASGSAPKFIRKFVEGIEDTVG) constitute a propeptide that is removed on maturation. Residues 1 to 130 (MAQMLLHGTL…LNGEEIDRWL (130 aa)) enclose the C2 domain. Residue Asp190 participates in Ca(2+) binding. In terms of domain architecture, PLD phosphodiesterase 1 spans 330-368 (TMFTHHQKIVVVDHELPNQGSQQRRIVSFVGGLDLCDGR). Active-site residues include His335, Lys337, and Asp342. His335 is a binding site for a 1,2-diacyl-sn-glycero-3-phosphate. Ca(2+) contacts are provided by His374 and His408. Gln524 and His663 together coordinate a 1,2-diacyl-sn-glycero-3-phosphate. One can recognise a PLD phosphodiesterase 2 domain in the interval 658 to 685 (FMIYVHTKMMIVDDEYIIIGSANINQRS). Residues His663, Lys665, and Asp670 contribute to the active site. Ca(2+) is bound at residue Glu724.

The protein belongs to the phospholipase D family. C2-PLD subfamily. As to quaternary structure, monomer. Ca(2+) serves as cofactor. As to expression, expressed in leaves, roots, developing seeds and cultured cells.

The enzyme catalyses a 1,2-diacyl-sn-glycero-3-phosphocholine + H2O = a 1,2-diacyl-sn-glycero-3-phosphate + choline + H(+). Functionally, hydrolyzes glycerol-phospholipids at the terminal phosphodiesteric bond. Plays an important role in various cellular processes. This chain is Phospholipase D alpha 1 (PLD1), found in Oryza sativa subsp. japonica (Rice).